Consider the following 125-residue polypeptide: Small ribosomal subunit protein eS8 (125 aa).

It belongs to the eukaryotic ribosomal protein eS8 family. Part of the 30S ribosomal subunit.

The polypeptide is Small ribosomal subunit protein eS8 (Methanosarcina barkeri (strain Fusaro / DSM 804)).